Reading from the N-terminus, the 339-residue chain is Biotin synthase (339 aa).

Positions 55 to 282 constitute a Radical SAM core domain; it reads NAVQLSTLLS…KAVVRLSAGR (228 aa). Positions 70, 74, and 77 each coordinate [4Fe-4S] cluster. Positions 114, 145, 205, and 277 each coordinate [2Fe-2S] cluster.

This sequence belongs to the radical SAM superfamily. Biotin synthase family. Homodimer. [4Fe-4S] cluster serves as cofactor. [2Fe-2S] cluster is required as a cofactor.

It catalyses the reaction (4R,5S)-dethiobiotin + (sulfur carrier)-SH + 2 reduced [2Fe-2S]-[ferredoxin] + 2 S-adenosyl-L-methionine = (sulfur carrier)-H + biotin + 2 5'-deoxyadenosine + 2 L-methionine + 2 oxidized [2Fe-2S]-[ferredoxin]. It participates in cofactor biosynthesis; biotin biosynthesis; biotin from 7,8-diaminononanoate: step 2/2. Functionally, catalyzes the conversion of dethiobiotin (DTB) to biotin by the insertion of a sulfur atom into dethiobiotin via a radical-based mechanism. In Burkholderia ambifaria (strain MC40-6), this protein is Biotin synthase.